Here is a 302-residue protein sequence, read N- to C-terminus: Mas-related G-protein coupled receptor member A3 (302 aa).

The Extracellular portion of the chain corresponds to 1-17 (MNETIPGSIDIETLIPD). Asn-2 is a glycosylation site (N-linked (GlcNAc...) asparagine). The helical transmembrane segment at 18–38 (LMIIIFGLVGLTGNAIVFWLL) threads the bilayer. Topologically, residues 39-46 (GFRMHRTA) are cytoplasmic. A helical membrane pass occupies residues 47-67 (FLVYILNLALADFLFLLCHII). Residue Asn-68 is glycosylated (N-linked (GlcNAc...) asparagine). Residues 68–81 (NSTVDLLKFTLPKG) are Extracellular-facing. A helical transmembrane segment spans residues 82–102 (IFAFCFHTIKRVLYITGLSML). Residues 103-129 (SAISTERCLSVLCPIWYHCRRPEHTST) are Cytoplasmic-facing. The chain crosses the membrane as a helical span at residues 130–150 (VMCAVIWVLSLLICILDGYFC). At 151–167 (GYLDNHYFNYSVCQAWD) the chain is on the extracellular side. Asn-159 carries N-linked (GlcNAc...) asparagine glycosylation. A helical membrane pass occupies residues 168-188 (IFIGAYLMFLFVVLCLSTLAL). Residues 189–211 (LARLFCGARNMKFTRLFVTIMLT) lie on the Cytoplasmic side of the membrane. The helical transmembrane segment at 212-232 (VLVFLLCGLPWGITWFLLFWI) threads the bilayer. Topologically, residues 233 to 242 (APGVFVLDYS) are extracellular. The helical transmembrane segment at 243 to 263 (PLLVLTAINSCANPIIYFFVG) threads the bilayer. Over 264–302 (SFRQRLNKQTLKMVLQKALQDTPETPENMVEMSRNKAEP) the chain is Cytoplasmic.

Belongs to the G-protein coupled receptor 1 family. Mas subfamily. In terms of tissue distribution, expressed exclusively in dorsal root ganglia and nodose ganglia. Expressed in a subset of sensory neurons that includes nociceptors. Expressed in the subclass of non-peptidergic sensory neurons that are IB4(+) and VR1(-).

The protein resides in the cell membrane. Orphan receptor. May be a receptor for RFamide-family neuropeptides such as NPFF and NPAF, which are analgesic in vivo. May regulate nociceptor function and/or development, including the sensation or modulation of pain. Activated by the antimalarial drug chloroquine. Mediates chloroquine-induced itch, in a histamine-independent manner. The sequence is that of Mas-related G-protein coupled receptor member A3 (Mrgpra3) from Mus musculus (Mouse).